A 155-amino-acid polypeptide reads, in one-letter code: Ribosomal RNA large subunit methyltransferase H (155 aa).

S-adenosyl-L-methionine is bound by residues L73, G104, and 123–128; that span reads LSPLTL.

It belongs to the RNA methyltransferase RlmH family. Homodimer.

The protein resides in the cytoplasm. The catalysed reaction is pseudouridine(1915) in 23S rRNA + S-adenosyl-L-methionine = N(3)-methylpseudouridine(1915) in 23S rRNA + S-adenosyl-L-homocysteine + H(+). Specifically methylates the pseudouridine at position 1915 (m3Psi1915) in 23S rRNA. The protein is Ribosomal RNA large subunit methyltransferase H of Pseudomonas putida (strain W619).